A 106-amino-acid polypeptide reads, in one-letter code: Large ribosomal subunit protein bL31B (106 aa).

The segment at 85–106 (PVQVAEEPVAKGKKKPSLKKKK) is disordered. Residues 95 to 106 (KGKKKPSLKKKK) show a composition bias toward basic residues.

This sequence belongs to the bacterial ribosomal protein bL31 family. Type B subfamily. Part of the 50S ribosomal subunit.

The polypeptide is Large ribosomal subunit protein bL31B (Chlamydia felis (strain Fe/C-56) (Chlamydophila felis)).